Here is a 282-residue protein sequence, read N- to C-terminus: Bis(5'-nucleosyl)-tetraphosphatase, symmetrical (282 aa).

The protein belongs to the Ap4A hydrolase family.

It carries out the reaction P(1),P(4)-bis(5'-adenosyl) tetraphosphate + H2O = 2 ADP + 2 H(+). In terms of biological role, hydrolyzes diadenosine 5',5'''-P1,P4-tetraphosphate to yield ADP. In Enterobacter sp. (strain 638), this protein is Bis(5'-nucleosyl)-tetraphosphatase, symmetrical.